The primary structure comprises 268 residues: Shikimate dehydrogenase (NADP(+)) (268 aa).

Shikimate-binding positions include 13–15 and Thr-60; that span reads SLS. The active-site Proton acceptor is the Lys-64. Asp-76 contacts NADP(+). Residues Asn-85 and Asp-100 each contribute to the shikimate site. Residues 124–128, 148–153, and Ile-209 contribute to the NADP(+) site; these read GAGGA and NRTMSR. Residue Tyr-211 coordinates shikimate. Gly-232 provides a ligand contact to NADP(+).

Belongs to the shikimate dehydrogenase family. Homodimer.

It carries out the reaction shikimate + NADP(+) = 3-dehydroshikimate + NADPH + H(+). It participates in metabolic intermediate biosynthesis; chorismate biosynthesis; chorismate from D-erythrose 4-phosphate and phosphoenolpyruvate: step 4/7. Its function is as follows. Involved in the biosynthesis of the chorismate, which leads to the biosynthesis of aromatic amino acids. Catalyzes the reversible NADPH linked reduction of 3-dehydroshikimate (DHSA) to yield shikimate (SA). This Staphylococcus haemolyticus (strain JCSC1435) protein is Shikimate dehydrogenase (NADP(+)).